Reading from the N-terminus, the 80-residue chain is Nuclear protein 1 (80 aa).

A disordered region spans residues 40–80 (GGRKGRTKREAAANTNRPSPGGHERKLLTKFQNSERKKAWR). The segment covering 61–80 (GHERKLLTKFQNSERKKAWR) has biased composition (basic and acidic residues). The short motif at 64-80 (RKLLTKFQNSERKKAWR) is the Nuclear localization signal element.

Belongs to the NUPR family. In terms of assembly, monomer. Directly interacts with MSL1 and binds MORF4L1, two components of histone acetyltransferase complex; the interaction with MORF4L1 may be mediated by MSL1. Interacts with EP300; this interaction enhances the effect of EP300 on PAX2 transcription factor activity. Interacts with PAXIP1; this interaction prevents PAXIP1 inhibition of PAX2 transcription factor activity. Interacts with COPS5; this interaction allows COPS5-dependent CDKN1B nuclear to cytoplasm translocation. Interacts with RNF2. Interacts with FOXO3; this interaction represses FOXO3 transactivation. Interacts with PTMA; regulates apoptotic process. Interacts with MYOD1, EP300 and DDX5; this interaction coordinates the association of anti-proliferative and pro-myogenic proteins at the myogenin promoter. Interacts with TP53; interaction is stress-dependent. Forms a complex with EP300 and TP53; this complex binds CDKN1A promoter leading to transcriptional induction of CDKN1A. Phosphorylated. Phosphorylation promotes DNA-binding activity. Post-translationally, acetylated. Strongly activated in pancreatic acinar cells during the acute phase of pancreatitis, in developing pancreas and during pancreatic regeneration.

Its subcellular location is the nucleus. The protein localises to the cytoplasm. It is found in the perinuclear region. Its function is as follows. Transcription regulator that converts stress signals into a program of gene expression that empowers cells with resistance to the stress induced by a change in their microenvironment. Thereby participates in the regulation of many processes namely cell-cycle, apoptosis, autophagy and DNA repair responses. Controls cell cycle progression and protects cells from genotoxic stress induced by doxorubicin through the complex formation with TP53 and EP300 that binds CDKN1A promoter leading to transcriptional induction of CDKN1A. Protects pancreatic cancer cells from stress-induced cell death by binding the RELB promoter and activating its transcription, leading to IER3 transactivation. Negatively regulates apoptosis through interaction with PTMA. Inhibits autophagy-induced apoptosis in cardiac cells through FOXO3 interaction, inducing cytoplasmic translocation of FOXO3 thereby preventing the FOXO3 association with the pro-autophagic BNIP3 promoter. Inhibits cell growth and facilitates programmed cell death by apoptosis after adriamycin-induced DNA damage through transactivation of TP53. Regulates methamphetamine-induced apoptosis and autophagy through DDIT3-mediated endoplasmic reticulum stress pathway. Participates in DNA repair following gamma-irradiation by facilitating DNA access of the transcription machinery through interaction with MSL1 leading to inhibition of histone H4' Lys-16' acetylation (H4K16ac). Coactivator of PAX2 transcription factor activity, both by recruiting the EP300 cofactor to increase PAX2 transcription factor activity and by binding PAXIP1 to suppress PAXIP1-induced inhibition on PAX2. Positively regulates cell cycle progression through interaction with COPS5 inducing cytoplasmic translocation of CDKN1B leading to the CDKN1B degradation. Coordinates, through its interaction with EP300, the assiociation of MYOD1, EP300 and DDX5 to the MYOG promoter, leading to inhibition of cell-cycle progression and myogenic differentiation promotion. Negatively regulates beta cell proliferation via inhibition of cell-cycle regulatory genes expression through the suppression of their promoter activities. Also required for LHB expression and ovarian maturation. Exacerbates CNS inflammation and demyelination upon cuprizone treatment. The sequence is that of Nuclear protein 1 from Rattus norvegicus (Rat).